The sequence spans 393 residues: NAD(P)H-quinone oxidoreductase subunit H, chloroplastic (393 aa).

The protein belongs to the complex I 49 kDa subunit family. In terms of assembly, NDH is composed of at least 16 different subunits, 5 of which are encoded in the nucleus.

It localises to the plastid. The protein localises to the chloroplast thylakoid membrane. It catalyses the reaction a plastoquinone + NADH + (n+1) H(+)(in) = a plastoquinol + NAD(+) + n H(+)(out). The enzyme catalyses a plastoquinone + NADPH + (n+1) H(+)(in) = a plastoquinol + NADP(+) + n H(+)(out). Its function is as follows. NDH shuttles electrons from NAD(P)H:plastoquinone, via FMN and iron-sulfur (Fe-S) centers, to quinones in the photosynthetic chain and possibly in a chloroplast respiratory chain. The immediate electron acceptor for the enzyme in this species is believed to be plastoquinone. Couples the redox reaction to proton translocation, and thus conserves the redox energy in a proton gradient. In Angiopteris evecta (Mule's foot fern), this protein is NAD(P)H-quinone oxidoreductase subunit H, chloroplastic.